We begin with the raw amino-acid sequence, 467 residues long: 3-isopropylmalate dehydratase large subunit (467 aa).

[4Fe-4S] cluster contacts are provided by Cys-348, Cys-409, and Cys-412. The disordered stretch occupies residues 423–449 (NERSISTSNRNFEGRQGKGSRTHLASP).

Belongs to the aconitase/IPM isomerase family. LeuC type 1 subfamily. As to quaternary structure, heterodimer of LeuC and LeuD. It depends on [4Fe-4S] cluster as a cofactor.

It catalyses the reaction (2R,3S)-3-isopropylmalate = (2S)-2-isopropylmalate. The protein operates within amino-acid biosynthesis; L-leucine biosynthesis; L-leucine from 3-methyl-2-oxobutanoate: step 2/4. Functionally, catalyzes the isomerization between 2-isopropylmalate and 3-isopropylmalate, via the formation of 2-isopropylmaleate. The chain is 3-isopropylmalate dehydratase large subunit from Bifidobacterium longum subsp. infantis (strain ATCC 15697 / DSM 20088 / JCM 1222 / NCTC 11817 / S12).